We begin with the raw amino-acid sequence, 211 residues long: Thymidylate kinase (211 aa).

11–18 (GPDGAGKT) is an ATP binding site.

Belongs to the thymidylate kinase family.

The catalysed reaction is dTMP + ATP = dTDP + ADP. In terms of biological role, phosphorylation of dTMP to form dTDP in both de novo and salvage pathways of dTTP synthesis. The chain is Thymidylate kinase from Streptococcus agalactiae serotype Ia (strain ATCC 27591 / A909 / CDC SS700).